The primary structure comprises 156 residues: Large ribosomal subunit protein uL15 (156 aa).

The segment covering 1 to 13 (MKLNEIKDNEGAT) has biased composition (basic and acidic residues). Positions 1-41 (MKLNEIKDNEGATKNRKRLGRGIGSGSGKTAGRGVKGQKAR) are disordered. A compositionally biased stretch (gly residues) spans 21–35 (RGIGSGSGKTAGRGV).

It belongs to the universal ribosomal protein uL15 family. Part of the 50S ribosomal subunit.

Binds to the 23S rRNA. This is Large ribosomal subunit protein uL15 from Sinorhizobium medicae (strain WSM419) (Ensifer medicae).